Reading from the N-terminus, the 301-residue chain is uncharacterized protein (301 aa).

Belongs to the asfivirus E301R family. Interacts with host IRF3.

Functionally, plays a role in the inhibition of host innate immune system by acting as a negatively regulator of type I interferon production. Mechanistically, interacts with and prevents host IRF3 nuclear localization to inhibit its transcriptional activity. This is an uncharacterized protein from African swine fever virus (isolate Warthog/Namibia/Wart80/1980) (ASFV).